The sequence spans 288 residues: Aquaporin PIP2-4 (288 aa).

A disordered region spans residues 1 to 24; that stretch reads MAKDIEASGPEAGEFSAKDYTDPP. Helical transmembrane passes span 42–62 and 79–99; these read AVIAEFIATLLFLYITVATVI and CGGVGILGIAWAFGGMIFILV. The short motif at 111–113 is the NPA 1 element; that stretch reads NPA. 3 helical membrane-spanning segments follow: residues 130–150, 172–192, and 206–226; these read LLYIIAQCLGAICGVGLVKGF, GTGLAAEIIGTFVLVYTVFSA, and VLAPLPIGFAVFMVHLATIPI. The short motif at 232–234 is the NPA 2 element; it reads NPA. The chain crosses the membrane as a helical span at residues 254–274; sequence IFWVGPLIGAAIAAAYHQYVL.

This sequence belongs to the MIP/aquaporin (TC 1.A.8) family. PIP (TC 1.A.8.11) subfamily. As to quaternary structure, homomers. May interact with PIP1-2 to form heteromers. In terms of tissue distribution, expressed in the root growing zone at 5-6 mm from the root tip.

It localises to the cell membrane. In terms of biological role, water channel required to facilitate the transport of water across cell membrane. Active as homomers. Increased activity when heteromerization with PIP1-2. This chain is Aquaporin PIP2-4 (PIP2-4), found in Zea mays (Maize).